Here is a 215-residue protein sequence, read N- to C-terminus: Urease accessory protein UreE (215 aa).

The interval 134 to 215 is disordered; that stretch reads FDPEGGAYAP…HGHSHKHDHK (82 aa). Residues 164–206 are compositionally biased toward basic and acidic residues; that stretch reads GHHDHADHEHDHKHDHGKHDHAGHDHAHDHHVHDEHCGHDHGH.

It belongs to the UreE family.

Its subcellular location is the cytoplasm. Its function is as follows. Involved in urease metallocenter assembly. Binds nickel. Probably functions as a nickel donor during metallocenter assembly. This Rhodopseudomonas palustris (strain HaA2) protein is Urease accessory protein UreE.